The primary structure comprises 884 residues: Coatomer subunit gamma-1 (884 aa).

5 HEAT repeats span residues 65-100 (VEAT…SPSS), 101-138 (DEVI…GTLL), 286-323 (RELA…TRPL), 325-357 (VTNC…TGNE), and 358-395 (SSVD…KFPL). The tract at residues 592–612 (QPLQEKKAPGKKPPAGAPAPA) is disordered. Pro residues predominate over residues 602 to 612 (KKPPAGAPAPA).

This sequence belongs to the COPG family. Oligomeric complex that consists of at least the alpha, beta, beta', gamma, delta, epsilon and zeta subunits.

The protein localises to the cytoplasm. Its subcellular location is the golgi apparatus membrane. It is found in the cytoplasmic vesicle. The protein resides in the COPI-coated vesicle membrane. Functionally, the coatomer is a cytosolic protein complex that binds to dilysine motifs and reversibly associates with Golgi non-clathrin-coated vesicles, which further mediate biosynthetic protein transport from the ER, via the Golgi up to the trans Golgi network. Coatomer complex is required for budding from Golgi membranes, and is essential for the retrograde Golgi-to-ER transport of dilysine-tagged proteins. The chain is Coatomer subunit gamma-1 from Oryza sativa subsp. japonica (Rice).